The primary structure comprises 151 residues: Large ribosomal subunit protein uL13 (151 aa).

This sequence belongs to the universal ribosomal protein uL13 family. In terms of assembly, part of the 50S ribosomal subunit.

In terms of biological role, this protein is one of the early assembly proteins of the 50S ribosomal subunit, although it is not seen to bind rRNA by itself. It is important during the early stages of 50S assembly. The polypeptide is Large ribosomal subunit protein uL13 (Synechocystis sp. (strain ATCC 27184 / PCC 6803 / Kazusa)).